The primary structure comprises 229 residues: Clathrin light chain B (229 aa).

The span at 1-17 (MADDFGFFSSSESGAPE) shows a compositional bias: low complexity. The segment at 1-82 (MADDFGFFSS…NGDVFQEANG (82 aa)) is disordered. 2 positions are modified to phosphoserine: Ser11 and Ser13. Residues 58-73 (GPTSGAGSEDMGTTVN) are compositionally biased toward polar residues. Residues 93 to 155 (ADRLTQEPES…QVEKNKINNR (63 aa)) form an involved in binding clathrin heavy chain region. Residue Thr187 is modified to Phosphothreonine. A disulfide bond links Cys199 and Cys209. Lys204 is modified (N6-acetyllysine). Residue Ser217 is modified to Phosphoserine.

The protein belongs to the clathrin light chain family. In terms of assembly, clathrin coats are formed from molecules containing 3 heavy chains and 3 light chains. Interacts (via N-terminus) with HIP1. Interacts with HIP1R.

It is found in the cytoplasmic vesicle membrane. The protein resides in the membrane. It localises to the coated pit. In terms of biological role, clathrin is the major protein of the polyhedral coat of coated pits and vesicles. The protein is Clathrin light chain B (CLTB) of Homo sapiens (Human).